We begin with the raw amino-acid sequence, 126 residues long: Glycine cleavage system H protein (126 aa).

Positions 22–104 (KAYIGITSFA…YEQAWMIVVE (83 aa)) constitute a Lipoyl-binding domain. The residue at position 63 (lysine 63) is an N6-lipoyllysine.

It belongs to the GcvH family. The glycine cleavage system is composed of four proteins: P, T, L and H. (R)-lipoate is required as a cofactor.

Its function is as follows. The glycine cleavage system catalyzes the degradation of glycine. The H protein shuttles the methylamine group of glycine from the P protein to the T protein. Is also involved in protein lipoylation via its role as an octanoyl/lipoyl carrier protein intermediate. The protein is Glycine cleavage system H protein of Brevibacillus brevis (strain 47 / JCM 6285 / NBRC 100599).